We begin with the raw amino-acid sequence, 329 residues long: Beta-ribofuranosylphenol 5'-phosphate synthase (329 aa).

This sequence belongs to the beta-RFA-P synthase family. Homodimer. The cofactor is Mg(2+).

The catalysed reaction is 5-phospho-alpha-D-ribose 1-diphosphate + 4-hydroxybenzoate + H(+) = 4-(beta-D-ribofuranosyl)phenol 5'-phosphate + CO2 + diphosphate. It catalyses the reaction 4-aminobenzoate + 5-phospho-alpha-D-ribose 1-diphosphate + H(+) = 4-(beta-D-ribofuranosyl)aminobenzene 5'-phosphate + CO2 + diphosphate. The protein operates within cofactor biosynthesis; 5,6,7,8-tetrahydromethanopterin biosynthesis. Functionally, catalyzes the condensation of 4-hydroxybenzoate (HB) with 5-phospho-alpha-D-ribose 1-diphosphate (PRPP) to produce beta-ribofuranosylphenol 5'-phosphate (beta-RFH-P). Also catalyzes the condensation of 4-aminobenzoate (pABA) with PRPP to produce beta-ribofuranosylaminobenzene 5'-phosphate (beta-RFA-P). Only 4-hydroxybenzoate is known to be biosynthesized by methanogenic archaea, but 4-aminobenzoate can be used as substrate by growing methanogens when it is present in the growth medium. This is Beta-ribofuranosylphenol 5'-phosphate synthase from Methanothermobacter thermautotrophicus (strain ATCC 29096 / DSM 1053 / JCM 10044 / NBRC 100330 / Delta H) (Methanobacterium thermoautotrophicum).